Here is a 1458-residue protein sequence, read N- to C-terminus: Anaphase-promoting complex subunit 1 (1458 aa).

The tract at residues 186 to 210 (QSIKSSRNRRRESSFSREKNPDLTR) is disordered. Over residues 196–210 (RESSFSREKNPDLTR) the composition is skewed to basic and acidic residues. PC repeat units lie at residues 873-895 (GLLL…KLLS), 959-982 (AAGF…SDLK), 1006-1024 (GAIM…LEVA), and 1099-1124 (GICF…INFL).

This sequence belongs to the APC1 family. The APC/C is composed of at least 13 subunits: apc1, apc2, nuc2, apc4, apc5, cut9, apc8, apc10, apc11, hcn1, apc13, apc14 and apc15.

Component of the anaphase-promoting complex/cyclosome (APC/C), a cell cycle-regulated E3 ubiquitin-protein ligase complex that controls progression through mitosis and the G1 phase of the cell cycle. The APC/C is thought to confer substrate specificity and, in the presence of ubiquitin-conjugating E2 enzymes, it catalyzes the formation of protein-ubiquitin conjugates that are subsequently degraded by the 26S proteasome. Mutations to this protein prevent the exit from mitosis. The polypeptide is Anaphase-promoting complex subunit 1 (cut4) (Schizosaccharomyces pombe (strain 972 / ATCC 24843) (Fission yeast)).